A 484-amino-acid polypeptide reads, in one-letter code: Serine/threonine-protein kinase RIO1 (484 aa).

Residues 76 to 402 (ADLNGCLSTG…EFDNADHECS (327 aa)) enclose the Protein kinase domain. Positions 125 and 198 each coordinate ATP. Asp244 (proton acceptor) is an active-site residue. Residues Asn249 and Asp261 each contribute to the Mg(2+) site. Asp261 (4-aspartylphosphate intermediate) is an active-site residue. The disordered stretch occupies residues 398 to 484 (DHECSSGTEE…KLVKKTKSKK (87 aa)). 6 positions are modified to phosphoserine; by CK2: Ser402, Ser403, Ser409, Ser416, Ser417, and Ser419. The interaction with CKA2 stretch occupies residues 403 to 484 (SGTEEFSDDE…KLVKKTKSKK (82 aa)). A compositionally biased stretch (acidic residues) spans 407–434 (EFSDDEEDGSSGSEEDDEEEGEYYDDDE). The interval 440 to 484 (GKKHEDKDLKKLRKQEAKDAKREKRKTKVKKHIKKKLVKKTKSKK) is association with (pre-)40S ribosomal subunit. Over residues 442-461 (KHEDKDLKKLRKQEAKDAKR) the composition is skewed to basic and acidic residues. Positions 462 to 484 (EKRKTKVKKHIKKKLVKKTKSKK) are enriched in basic residues.

Belongs to the protein kinase superfamily. RIO-type Ser/Thr kinase family. Interacts with CKA2. Mg(2+) serves as cofactor. In terms of processing, autophosphorylated. Phosphorylated by casein kinase II (CK2). Phosphorylation by CK2 stimulates RIO1 kinase activity and targets it for degradation at the G1/S transition of the cell cycle.

It is found in the cytoplasm. The enzyme catalyses L-seryl-[protein] + ATP = O-phospho-L-seryl-[protein] + ADP + H(+). It carries out the reaction L-threonyl-[protein] + ATP = O-phospho-L-threonyl-[protein] + ADP + H(+). The catalysed reaction is ATP + H2O = ADP + phosphate + H(+). Its function is as follows. Required for the final endonucleolytic cleavage at site D converting 20S pre-rRNA into the mature 18S rRNA. Required for the final steps of cytoplasmic maturation of the 40S ribosomal subunit. The association with the very late 40S subunit intermediate seems to follow RIO2 association with precursors of the 40S subunit and may involve a translation-like checkpoint point cycle preceeding the binding to the 60S ribosomal subunit. Despite the protein kinase domain is proposed to act predominantly as an ATPase. The catalytic activity regulates its dynamic association with the 40S subunit. Has a role in the cell cycle where it is required for entrance into S-phase and in the control of the onset of anaphase. Appears to also be involved in the maintenance of chromosome stability and correct mitotic segregation. This chain is Serine/threonine-protein kinase RIO1 (RIO1), found in Saccharomyces cerevisiae (strain ATCC 204508 / S288c) (Baker's yeast).